The following is a 471-amino-acid chain: UDP-N-acetylmuramate--L-alanine ligase (471 aa).

ATP is bound at residue 125–131 (GTHGKTT).

It belongs to the MurCDEF family.

The protein resides in the cytoplasm. It carries out the reaction UDP-N-acetyl-alpha-D-muramate + L-alanine + ATP = UDP-N-acetyl-alpha-D-muramoyl-L-alanine + ADP + phosphate + H(+). The protein operates within cell wall biogenesis; peptidoglycan biosynthesis. Functionally, cell wall formation. This is UDP-N-acetylmuramate--L-alanine ligase from Kineococcus radiotolerans (strain ATCC BAA-149 / DSM 14245 / SRS30216).